A 290-amino-acid chain; its full sequence is Probable ECF RNA polymerase sigma factor SigI (290 aa).

The tract at residues 11–74 (WRAHRAYLVD…LCLDHIKSAS (64 aa)) is sigma-70 factor domain-2. A Polymerase core binding motif is present at residues 34 to 37 (DMVQ). Residues 110–162 (LALLIMLERLGPAERVVFVLHEIFGLPYQQIATTIGSQASTCRQLAHRARRKI) form a sigma-70 factor domain-4_2 region. The H-T-H motif DNA-binding region spans 137–156 (YQQIATTIGSQASTCRQLAH).

Belongs to the sigma-70 factor family. ECF subfamily. In terms of assembly, interacts transiently with the RNA polymerase catalytic core formed by RpoA, RpoB, RpoC and RpoZ (2 alpha, 1 beta, 1 beta' and 1 omega subunit) to form the RNA polymerase holoenzyme that can initiate transcription.

Its function is as follows. Sigma factors are initiation factors that promote the attachment of RNA polymerase to specific initiation sites and are then released. Extracytoplasmic function (ECF) sigma factors are held in an inactive form by a cognate anti-sigma factor until released, although no anti-sigma factor is known for this protein. The polypeptide is Probable ECF RNA polymerase sigma factor SigI (sigI) (Mycobacterium tuberculosis (strain CDC 1551 / Oshkosh)).